Consider the following 198-residue polypeptide: Anthranilate synthase component 2 (198 aa).

The Glutamine amidotransferase type-1 domain occupies 2–198 (LLMMIDNYDS…NFLKQTGGRR (197 aa)). 53–55 (GPC) lines the L-glutamine pocket. The active-site Nucleophile; for GATase activity is Cys80. L-glutamine is bound by residues Gln84 and 130–131 (SL). Active-site for GATase activity residues include His174 and Glu176.

In terms of assembly, heterotetramer consisting of two non-identical subunits: a beta subunit (TrpG) and a large alpha subunit (TrpE).

The catalysed reaction is chorismate + L-glutamine = anthranilate + pyruvate + L-glutamate + H(+). It participates in amino-acid biosynthesis; L-tryptophan biosynthesis; L-tryptophan from chorismate: step 1/5. Functionally, part of a heterotetrameric complex that catalyzes the two-step biosynthesis of anthranilate, an intermediate in the biosynthesis of L-tryptophan. In the first step, the glutamine-binding beta subunit (TrpG) of anthranilate synthase (AS) provides the glutamine amidotransferase activity which generates ammonia as a substrate that, along with chorismate, is used in the second step, catalyzed by the large alpha subunit of AS (TrpE) to produce anthranilate. In the absence of TrpG, TrpE can synthesize anthranilate directly from chorismate and high concentrations of ammonia. This is Anthranilate synthase component 2 (trpG) from Pseudomonas putida (Arthrobacter siderocapsulatus).